The chain runs to 82 residues: Cytochrome b-c1 complex subunit 8 (82 aa).

Topologically, residues 1-39 are mitochondrial matrix; it reads MGREFGNLTRMRHVISYSLSPFEQRAHPHVFTKGIPNVL. Residue serine 16 is modified to Phosphoserine. Lysine 33 bears the N6-acetyllysine; alternate mark. Residue lysine 33 is modified to N6-succinyllysine; alternate. The chain crosses the membrane as a helical span at residues 40–68; sequence RRFRESFFRVAPQFVVFYLIYTWGTEEFE. Over 69–82 the chain is Mitochondrial intermembrane; sequence RSKRKNPAAYENDK.

It belongs to the UQCRQ/QCR8 family. Component of the ubiquinol-cytochrome c oxidoreductase (cytochrome b-c1 complex, complex III, CIII), a multisubunit enzyme composed of 11 subunits. The complex is composed of 3 respiratory subunits cytochrome b, cytochrome c1 and Rieske protein UQCRFS1, 2 core protein subunits UQCRC1/QCR1 and UQCRC2/QCR2, and 6 low-molecular weight protein subunits UQCRH/QCR6, UQCRB/QCR7, UQCRQ/QCR8, UQCR10/QCR9, UQCR11/QCR10 and subunit 9, the cleavage product of Rieske protein UQCRFS1. The complex exists as an obligatory dimer and forms supercomplexes (SCs) in the inner mitochondrial membrane with NADH-ubiquinone oxidoreductase (complex I, CI) and cytochrome c oxidase (complex IV, CIV), resulting in different assemblies (supercomplex SCI(1)III(2)IV(1) and megacomplex MCI(2)III(2)IV(2)). Interacts with UQCC6.

The protein resides in the mitochondrion inner membrane. Functionally, component of the ubiquinol-cytochrome c oxidoreductase, a multisubunit transmembrane complex that is part of the mitochondrial electron transport chain which drives oxidative phosphorylation. The respiratory chain contains 3 multisubunit complexes succinate dehydrogenase (complex II, CII), ubiquinol-cytochrome c oxidoreductase (cytochrome b-c1 complex, complex III, CIII) and cytochrome c oxidase (complex IV, CIV), that cooperate to transfer electrons derived from NADH and succinate to molecular oxygen, creating an electrochemical gradient over the inner membrane that drives transmembrane transport and the ATP synthase. The cytochrome b-c1 complex catalyzes electron transfer from ubiquinol to cytochrome c, linking this redox reaction to translocation of protons across the mitochondrial inner membrane, with protons being carried across the membrane as hydrogens on the quinol. In the process called Q cycle, 2 protons are consumed from the matrix, 4 protons are released into the intermembrane space and 2 electrons are passed to cytochrome c. The polypeptide is Cytochrome b-c1 complex subunit 8 (UQCRQ) (Pongo abelii (Sumatran orangutan)).